Here is a 245-residue protein sequence, read N- to C-terminus: Large ribosomal subunit protein uL2 (245 aa).

Residues 198 to 245 form a disordered region; it reads VSHPHGGGSHKRPGKPTTVARTAPPGQKVGHIAARKTGRAKRRAATKR. Over residues 230 to 245 the composition is skewed to basic residues; it reads AARKTGRAKRRAATKR.

It belongs to the universal ribosomal protein uL2 family. As to quaternary structure, part of the 50S ribosomal subunit. Forms a bridge to the 30S subunit in the 70S ribosome.

In terms of biological role, one of the primary rRNA binding proteins. Required for association of the 30S and 50S subunits to form the 70S ribosome, for tRNA binding and peptide bond formation. It has been suggested to have peptidyltransferase activity; this is somewhat controversial. Makes several contacts with the 16S rRNA in the 70S ribosome. This is Large ribosomal subunit protein uL2 from Korarchaeum cryptofilum (strain OPF8).